A 373-amino-acid chain; its full sequence is Superinfection exclusion protein (373 aa).

A signal peptide spans 1–15 (MIVLLILSLACTAFT).

It belongs to the serpin family. Orthopoxvirus OPG040 subfamily. Interacts with A56 protein.

It localises to the virion membrane. The protein resides in the host cell membrane. Functionally, prevents cell to cell fusion via its interaction with A56 protein. The A56-K2 complex associates with components of the entry fusion complex (EFC) presumably to avoid superinfection and syncytium formation. This chain is Superinfection exclusion protein (OPG040), found in Homo sapiens (Human).